The following is a 2556-amino-acid chain: MTITTRGSPVGENESQGQTSDGQPQPSFQQNQISSSDSSNETSPTTPPYEQGQGDAPPQHEEEDPSFPHTDLAKLEDMINRSRWVVPVLPKGELEVLLEASIDLTKKGLDVKSEACQRFFRDVLTVSFSKILMDEAVSGWKFEIHRCIINNTHRLVELCVAKLSQDWFPFLELLAIALNPHCKFHVYNGARPCESVSSSVQFPEDELFACSPDLHSPKGWLVDLINTFGTLNGFQILHDRFTSGSALNVQTIAALIKPFGQCYEFLTQHTLRKYFIPVIEVVPQILQKLTNEELKKETKTEVKNDTISMIIKFLKNLASRIPGQEETVKNLETFRLKMILRLLQISSFNGKMNALNEINKVLSSVSYYTHGHGNSEEEWLTVERMTEWIQQNNILSIVLQDSLHQPQYVEKIEKILRFVIKEKALTLQDLNNIWAAQAGKHEAIVKNVHDLLAKLAWNFSPEQLDHLFDCFKASWTNASKKQREKLLELIRRLAEDDKDGVMAHKVLNLLWNLAHSDDVPVDIMDLALSAHIKILDYSCSQDRDTQKIQWIDCFIEEFRTNNKWVIPALKQIKEICSLFGEAPQNLSQTHQSPRVFYRHDLISQLQHNHALVTLVAENLAAYMNSIRLYARDHEDYDPQTVRLGSRYSHVQEVQERLNFLRFLLKDGQLWLCVSQAKQIWNCLAENAVYFSDREACFMWYSKLMGDEPDLHPDINKEFFESNVLQLDPSLLTENGMKCFERFFKTVNCREGKLMIKRKIYMMDDLDLIGLDYLWKVVIQSNDDISSRAIDLLKEIYTSLGPKLQANQVVIHEDFIQSCFDRLKASYDTLCVLDSEKDNIFSCARQEAIRMVRILTVLREYISEYDSDYHEERMILPMSRAFRGKHLSFTVRFPNQGKEVEDLDILSHTNATIGSVRRCILNRMNVNVAHTKIELFIGGELVASEDDRKLVEQLNLKDKSLITAKFIQINSNMPSSPDSSSDSSAGPPGNHSHNNYRDVSNPEMEKCLPGVIMSLQPRYISFLWQVADLGSMLTVPTLRDGARILMKLMPPDSTTLEQLRALCSDHVNLGERRLGQSLHSLFFGSSASQVLYLTEVVYTLLMPAGAPLADISSDFQYHFLKSGGLPLVLSMLIQNNFLPNTDVETRRDAYFSALKIAKLLLTIVGYGHVQAIAEACQPVADGTDPKTPINQVTHDQAVVLQNALQSIPNPSSECMLRNVSVHLAQQISGLASRYIPDICVIRAIQKIIWAAGCGSLELVFSPNEDITETYKMTTSTRSNLEVKDEQVCCEALEVMTLCFALIPTAMDSLNKEKAWQSFVIDLLLYCPSKTVRQLAQEQFFLICTRCCMGHRPLLFFITLLFTILGGAANEKGKHSDVYFTLLRRLLTYAYNSNIQVPNVDVLLNDEIDWLKRVRDYIKNTGETNVEDPILEGHLGVTKELLSFQSPEKKYHIGCKTGGANLVKELIDYFIFPASKAYLQYMRSGELPIKQAIPVCGSPATINAGFELLVALAFGCVRNLKQIVNCLTELFYIGTPVTTCEAVGEWEYLPPVGPRPPKGFVGLKNAGATCYMNSVIQQLYMIPSIRNSILAIDSIWSDTDDDIFKGEKQDSENNVDPRDDVFRYPHQFEDKPTLSKVEDRKEYNIAVLKHLQITFGHLAASQLQYYVPKGFWQQFRLWGEPVNLREQHDALEFFNSLVDSLDEAFKALGYPTVLSKVLGGSFADQKICQGCPHRYECEESFTTLNVDIRNHQNLLDSLEQYVKGDLLEGANAYHCEKCDKKVDTVKRLLIKKLPSVLTIQLKRFDYDWERECAIKFNDYFEFPRELDMEPYTVAGATKLEGDSVNPQTQLIKQNEQSESVIPGSTKYRLVGVLVHSGQANGGHYYSYIIQRNGKDSKRSHWFKFDDGDVTECKMDDDEEMKNQCFGGEYMGEVFDHMMKRMSYRRQKRWWNAYILFYERMDITDEDDEIITYISELTFTRPHQIMSPAIERSVWKQNVQFLHNQMQFSLEYFQFIKKLLTCNAVYLSPAPGQDHLLPEAEDITMISIQLASRFLFTTGFHTKKIIRGPANDWYDALCILLRHSKNVRFWFVHNVLFNVSNRFSEYLLECPSAEIRGTFAKLIVFIAHFSLQDGSSPSPFTSPFANPGPYSQIYDNLSLSDHLLKAVLSLLRREVSEHGRHLQQYFNLFIMYASLGLAEKTQLLKLNVPATFMLVSLDEGPGPPVKYQYAELSKLHSVVSQLIRCCSVSSRMQSSINGNPPLPNPFGDPNLSQPIMPIQQNVADILFMRTTYMKKVIEDCSNSEDTVKLLLFCCWENPQFSCSVLSELLWQVAHSHAYELQPYLDLLLQIILFEDSWQAHRIHNALKGIPNDQDGLFDTIQHSKNHHQKRAYQCIKWMVTLFNSCPVAYQILQGNGDLKNKWTWAMEWLGDELERKPYSGNPQYTYSNWSPPVQSNETANGYFLEKSHSAKMKLTKACDLYPEEDPDDQDALDEHVSHAPQDRTFYLYSHRSHYQQNYVPEQPFSGPASHHLNNPQKNDKPQETHESNEEISSCLIKDQ.

Over residues 1 to 33 the composition is skewed to polar residues; the sequence is MTITTRGSPVGENESQGQTSDGQPQPSFQQNQI. Residues 1–68 form a disordered region; that stretch reads MTITTRGSPV…QHEEEDPSFP (68 aa). Low complexity predominate over residues 34-44; the sequence is SSSDSSNETSP. Residue Ser587 is modified to Phosphoserine. Phosphothreonine is present on Thr589. The interval 971–999 is disordered; sequence NMPSSPDSSSDSSAGPPGNHSHNNYRDVS. Residues 973–983 are compositionally biased toward low complexity; sequence PSSPDSSSDSS. In terms of domain architecture, USP spans 1559–1958; sequence VGLKNAGATC…NAYILFYERM (400 aa). The Nucleophile role is filled by Cys1568. Zn(2+) contacts are provided by Cys1729, His1731, Cys1773, and Cys1776. The Proton acceptor role is filled by His1881. Phosphoserine is present on Ser2447. The disordered stretch occupies residues 2513-2556; the sequence is QNYVPEQPFSGPASHHLNNPQKNDKPQETHESNEEISSCLIKDQ. Positions 2534-2545 are enriched in basic and acidic residues; that stretch reads KNDKPQETHESN. Ser2549 carries the phosphoserine modification.

This sequence belongs to the peptidase C19 family.

It catalyses the reaction Thiol-dependent hydrolysis of ester, thioester, amide, peptide and isopeptide bonds formed by the C-terminal Gly of ubiquitin (a 76-residue protein attached to proteins as an intracellular targeting signal).. The protein operates within protein modification; protein ubiquitination. Deubiquitinase that mediates deubiquitination of target proteins. May stabilize target proteins that are important for male germ cell development. The chain is Ubiquitin carboxyl-terminal hydrolase 9Y from Mus musculus (Mouse).